Here is a 408-residue protein sequence, read N- to C-terminus: LL-diaminopimelate aminotransferase (408 aa).

2 residues coordinate substrate: Tyr-15 and Gly-42. Pyridoxal 5'-phosphate contacts are provided by residues Tyr-72, 108-109 (SK), Tyr-132, Asn-187, Tyr-218, and 246-248 (SFS). 3 residues coordinate substrate: Lys-109, Tyr-132, and Asn-187. An N6-(pyridoxal phosphate)lysine modification is found at Lys-249. 2 residues coordinate pyridoxal 5'-phosphate: Arg-257 and Asn-292. Residues Asn-292 and Arg-388 each contribute to the substrate site.

It belongs to the class-I pyridoxal-phosphate-dependent aminotransferase family. LL-diaminopimelate aminotransferase subfamily. Homodimer. Pyridoxal 5'-phosphate is required as a cofactor.

It catalyses the reaction (2S,6S)-2,6-diaminopimelate + 2-oxoglutarate = (S)-2,3,4,5-tetrahydrodipicolinate + L-glutamate + H2O + H(+). It participates in amino-acid biosynthesis; L-lysine biosynthesis via DAP pathway; LL-2,6-diaminopimelate from (S)-tetrahydrodipicolinate (aminotransferase route): step 1/1. In terms of biological role, involved in the synthesis of meso-diaminopimelate (m-DAP or DL-DAP), required for both lysine and peptidoglycan biosynthesis. Catalyzes the direct conversion of tetrahydrodipicolinate to LL-diaminopimelate. This chain is LL-diaminopimelate aminotransferase, found in Synechococcus sp. (strain RCC307).